A 485-amino-acid chain; its full sequence is Putative phosphoethanolamine transferase HI_1064 (485 aa).

The next 4 helical transmembrane spans lie at 33–53 (ILPA…ILIG), 55–75 (GMFT…ILLL), 81–101 (SFYF…PTGL), and 125–145 (FLLQ…ILIF).

The protein belongs to the phosphoethanolamine transferase family.

It localises to the cell membrane. This is Putative phosphoethanolamine transferase HI_1064 from Haemophilus influenzae (strain ATCC 51907 / DSM 11121 / KW20 / Rd).